The chain runs to 471 residues: Glutamyl-tRNA(Gln) amidotransferase subunit A (471 aa).

Residues lysine 66 and serine 141 each act as charge relay system in the active site. Catalysis depends on serine 165, which acts as the Acyl-ester intermediate.

This sequence belongs to the amidase family. GatA subfamily. As to quaternary structure, heterotrimer of A, B and C subunits.

It carries out the reaction L-glutamyl-tRNA(Gln) + L-glutamine + ATP + H2O = L-glutaminyl-tRNA(Gln) + L-glutamate + ADP + phosphate + H(+). Functionally, allows the formation of correctly charged Gln-tRNA(Gln) through the transamidation of misacylated Glu-tRNA(Gln) in organisms which lack glutaminyl-tRNA synthetase. The reaction takes place in the presence of glutamine and ATP through an activated gamma-phospho-Glu-tRNA(Gln). The polypeptide is Glutamyl-tRNA(Gln) amidotransferase subunit A (Thermus thermophilus (strain ATCC BAA-163 / DSM 7039 / HB27)).